We begin with the raw amino-acid sequence, 245 residues long: tRNA pseudouridine synthase A (245 aa).

The active-site Nucleophile is the Asp52. Tyr111 contributes to the substrate binding site.

This sequence belongs to the tRNA pseudouridine synthase TruA family. As to quaternary structure, homodimer.

It carries out the reaction uridine(38/39/40) in tRNA = pseudouridine(38/39/40) in tRNA. In terms of biological role, formation of pseudouridine at positions 38, 39 and 40 in the anticodon stem and loop of transfer RNAs. This Rickettsia rickettsii (strain Iowa) protein is tRNA pseudouridine synthase A.